The following is a 105-amino-acid chain: Circadian clock oscillator protein KaiB1 (105 aa).

The protein belongs to the KaiB family. In terms of assembly, homotetramer in solution and crystals formed by 2 dimers. Only elutes as a homotetramer in size exclusion chromatography, interacts with KaiC1 and KaiC3. The KaiABC complex composition changes during the circadian cycle to control KaiC phosphorylation. Complexes KaiC(6), KaiA(2-4):KaiC(6), KaiB(6):KaiC(6) and KaiC(6):KaiB(6):KaiA(12) are among the most important forms, many form cooperatively. Undergoes a major conformational rearrangment; in the free state forms homotetramers as a dimer of dimers. When bound to the CI domain of KaiC switches to a monomeric thioredoxin-fold (KaiB(fs)). KaiB(fs) binds CikA, leading it to dephosphorylate phospho-RpaA.

Key component of the KaiABC oscillator complex, which constitutes the main circadian regulator in cyanobacteria. Complex composition changes during the circadian cycle to control KaiC phosphorylation. KaiA stimulates KaiC autophosphorylation, while KaiB sequesters KaiA, leading to KaiC autodephosphorylation. Phospho-Ser-431 KaiC accumulation triggers binding of KaiB to form the KaiB(6):KaiC(6) complex, leading to changes in output regulators CikA and SasA. KaiB switches to a thioredoxin-like fold (KaiB(fs)) when bound to KaiC. KaiB(6):KaiC(6) formation exposes a site for KaiA binding that sequesters KaiA from KaiC, making the KaiC(6):KaiB(6):KaiA(12) complex that results in KaiC autodephosphorylation. In terms of biological role, component of the oscillator and circadian clock in this organism, enhances fitness in a rhythmic environment. The homotetramer reduces the ATPase activity of KaiC3 by 35%. Functionally, a metamorphic protein which reversibly switches between an inactive tetrameric fold and a rare, thioredoxin-like monomeric fold (KaiB(fs)). KaiB(fs) binds phospho-KaiC, KaiA and CikA. KaiA and CikA compete for binding to KaiB(fs), and KaiB(fs) and SasA compete for binding to KaiC, thus the clock oscillator and output signal pathway are tightly coupled. In Synechocystis sp. (strain ATCC 27184 / PCC 6803 / Kazusa), this protein is Circadian clock oscillator protein KaiB1.